We begin with the raw amino-acid sequence, 68 residues long: Guanine nucleotide-binding protein G(I)/G(S)/G(O) subunit gamma-5B (68 aa).

Residues 3–68 enclose the G protein gamma domain; that stretch reads GFSSVAATKK…FRPQKVCSFL (66 aa). Cys-65 is modified (cysteine methyl ester). The S-geranylgeranyl cysteine moiety is linked to residue Cys-65. The propeptide at 66–68 is removed in mature form; that stretch reads SFL.

It belongs to the G protein gamma family. G proteins are composed of 3 units; alpha, beta and gamma.

Its subcellular location is the cell membrane. Guanine nucleotide-binding proteins (G proteins) are involved as a modulator or transducer in various transmembrane signaling systems. The beta and gamma chains are required for the GTPase activity, for replacement of GDP by GTP, and for G protein-effector interaction. The protein is Guanine nucleotide-binding protein G(I)/G(S)/G(O) subunit gamma-5B of Homo sapiens (Human).